The following is a 467-amino-acid chain: tRNA-2-methylthio-N(6)-dimethylallyladenosine synthase (467 aa).

The segment at 1–20 (MSDDTTQIEPAMAQETSPRA) is disordered. Residues 23–143 (RKVFVKTYGC…LPNALARVRG (121 aa)) enclose the MTTase N-terminal domain. Residues C32, C68, C106, C184, C188, and C191 each contribute to the [4Fe-4S] cluster site. The 233-residue stretch at 170 to 402 (RKRGVSAFLT…QALLSAQQYA (233 aa)) folds into the Radical SAM core domain. The TRAM domain maps to 405–467 (DSMIGRKMDV…TNSLIAQKLA (63 aa)).

It belongs to the methylthiotransferase family. MiaB subfamily. In terms of assembly, monomer. It depends on [4Fe-4S] cluster as a cofactor.

It localises to the cytoplasm. It catalyses the reaction N(6)-dimethylallyladenosine(37) in tRNA + (sulfur carrier)-SH + AH2 + 2 S-adenosyl-L-methionine = 2-methylsulfanyl-N(6)-dimethylallyladenosine(37) in tRNA + (sulfur carrier)-H + 5'-deoxyadenosine + L-methionine + A + S-adenosyl-L-homocysteine + 2 H(+). Catalyzes the methylthiolation of N6-(dimethylallyl)adenosine (i(6)A), leading to the formation of 2-methylthio-N6-(dimethylallyl)adenosine (ms(2)i(6)A) at position 37 in tRNAs that read codons beginning with uridine. The protein is tRNA-2-methylthio-N(6)-dimethylallyladenosine synthase of Brucella melitensis biotype 1 (strain ATCC 23456 / CCUG 17765 / NCTC 10094 / 16M).